The following is a 155-amino-acid chain: Small ribosomal subunit protein uS7cz/uS7cy (155 aa).

This sequence belongs to the universal ribosomal protein uS7 family. Part of the 30S ribosomal subunit.

The protein resides in the plastid. Its subcellular location is the chloroplast. In terms of biological role, one of the primary rRNA binding proteins, it binds directly to 16S rRNA where it nucleates assembly of the head domain of the 30S subunit. The polypeptide is Small ribosomal subunit protein uS7cz/uS7cy (rps7-A) (Acorus calamus var. americanus (American sweet flag)).